A 154-amino-acid polypeptide reads, in one-letter code: Spermatogenesis-associated protein 19, mitochondrial (154 aa).

The N-terminal 24 residues, 1 to 24 (MIITTWIVYILARKGAGLPFPPKV), are a transit peptide targeting the mitochondrion. A phosphoserine mark is found at Ser-26 and Ser-116.

Its subcellular location is the mitochondrion outer membrane. The protein localises to the mitochondrion. It localises to the cell projection. The protein resides in the cilium. It is found in the flagellum. In terms of biological role, essential for sperm motility and male fertility. Plays an important role in sperm motility by regulating the organization and function of the mitochondria and is also required for correct sperm midpiece assembly. The chain is Spermatogenesis-associated protein 19, mitochondrial (SPATA19) from Bos taurus (Bovine).